The sequence spans 25 residues: Germin-like protein (25 aa).

It belongs to the germin family.

The chain is Germin-like protein from Populus euphratica (Euphrates poplar).